The chain runs to 852 residues: Lon protease homolog 2, peroxisomal (852 aa).

The residue at position 2 (serine 2) is an N-acetylserine. The 210-residue stretch at 13–222 folds into the Lon N-terminal domain; the sequence is LPLLLTHEGV…MTIPLLVRQI (210 aa). 375–382 contacts ATP; sequence GPPGVGKT. The region spanning 651-837 is the Lon proteolytic domain; that stretch reads LSQPGVAIGL…DEVLNAAFDG (187 aa). Residues serine 743 and lysine 786 contribute to the active site. The short motif at 850–852 is the Microbody targeting signal element; the sequence is SKL.

This sequence belongs to the peptidase S16 family. As to quaternary structure, interacts with PEX5. Interacts with TYSND1. May interact with enzymes involved in beta-oxidation of fatty acids, including ACOX1/AOX. As to expression, widely expressed, with high levels in the liver, kidney and pancreas.

The protein resides in the peroxisome matrix. It carries out the reaction Hydrolysis of proteins in presence of ATP.. ATP-dependent serine protease that mediates the selective degradation of misfolded and unassembled polypeptides in the peroxisomal matrix. Necessary for type 2 peroxisome targeting signal (PTS2)-containing protein processing and facilitates peroxisome matrix protein import. May indirectly regulate peroxisomal fatty acid beta-oxidation through degradation of the self-processed forms of TYSND1. The sequence is that of Lon protease homolog 2, peroxisomal from Homo sapiens (Human).